Here is a 243-residue protein sequence, read N- to C-terminus: Small ribosomal subunit protein eS4 (243 aa).

The 63-residue stretch at 43–105 folds into the S4 RNA-binding domain; it reads IPLLYIVRDY…TGEHYRVLPN (63 aa).

The protein belongs to the eukaryotic ribosomal protein eS4 family.

The polypeptide is Small ribosomal subunit protein eS4 (rps4e) (Pyrococcus abyssi (strain GE5 / Orsay)).